The chain runs to 247 residues: UPF0246 protein LSEI_2080 (247 aa).

Belongs to the UPF0246 family.

The protein is UPF0246 protein LSEI_2080 of Lacticaseibacillus paracasei (strain ATCC 334 / BCRC 17002 / CCUG 31169 / CIP 107868 / KCTC 3260 / NRRL B-441) (Lactobacillus paracasei).